Reading from the N-terminus, the 197-residue chain is Histone chaperone asf1b-A (197 aa).

Belongs to the ASF1 family. Interacts with histone H3 and histone H4.

It is found in the nucleus. Functionally, histone chaperone that facilitates histone deposition and histone exchange and removal during nucleosome assembly and disassembly. This Danio rerio (Zebrafish) protein is Histone chaperone asf1b-A (asf1ba).